A 41-amino-acid polypeptide reads, in one-letter code: Photosystem I reaction center subunit IX (41 aa).

The chain crosses the membrane as a helical span at residues 7 to 27; that stretch reads YLSTAPVVAFAWITITAGLLI.

It belongs to the PsaJ family.

Its subcellular location is the plastid. The protein localises to the chloroplast thylakoid membrane. In terms of biological role, may help in the organization of the PsaE and PsaF subunits. The chain is Photosystem I reaction center subunit IX from Oedogonium cardiacum (Filamentous green alga).